The chain runs to 499 residues: Lysine--tRNA ligase (499 aa).

Positions 408 and 415 each coordinate Mg(2+).

The protein belongs to the class-II aminoacyl-tRNA synthetase family. Homodimer. Mg(2+) is required as a cofactor.

The protein localises to the cytoplasm. The enzyme catalyses tRNA(Lys) + L-lysine + ATP = L-lysyl-tRNA(Lys) + AMP + diphosphate. The polypeptide is Lysine--tRNA ligase (Bacillus cereus (strain AH820)).